The sequence spans 343 residues: Tetraacyldisaccharide 4'-kinase (343 aa).

Position 47–54 (47–54) interacts with ATP; it reads SVGGTGKT.

It belongs to the LpxK family.

The enzyme catalyses a lipid A disaccharide + ATP = a lipid IVA + ADP + H(+). It participates in glycolipid biosynthesis; lipid IV(A) biosynthesis; lipid IV(A) from (3R)-3-hydroxytetradecanoyl-[acyl-carrier-protein] and UDP-N-acetyl-alpha-D-glucosamine: step 6/6. Functionally, transfers the gamma-phosphate of ATP to the 4'-position of a tetraacyldisaccharide 1-phosphate intermediate (termed DS-1-P) to form tetraacyldisaccharide 1,4'-bis-phosphate (lipid IVA). The polypeptide is Tetraacyldisaccharide 4'-kinase (Flavobacterium psychrophilum (strain ATCC 49511 / DSM 21280 / CIP 103535 / JIP02/86)).